Here is a 218-residue protein sequence, read N- to C-terminus: Small ribosomal subunit protein uS3 (218 aa).

The 69-residue stretch at 38–106 folds into the KH type-2 domain; it reads VREYINKRLQ…RVHINIVEIK (69 aa).

This sequence belongs to the universal ribosomal protein uS3 family. As to quaternary structure, part of the 30S ribosomal subunit. Forms a tight complex with proteins S10 and S14.

Binds the lower part of the 30S subunit head. Binds mRNA in the 70S ribosome, positioning it for translation. This Geobacillus thermodenitrificans (strain NG80-2) protein is Small ribosomal subunit protein uS3.